The chain runs to 564 residues: Interactor of constitutive active ROPs 3 (564 aa).

Disordered stretches follow at residues 1–73 (MQTQ…SRIT) and 88–135 (KAKD…SALE). Over residues 33–44 (ESSSSPISATNR) the composition is skewed to polar residues. Composition is skewed to basic and acidic residues over residues 63 to 73 (VSEKKRPSRIT) and 98 to 123 (TSKK…KLEE). 2 coiled-coil regions span residues 70–133 (SRIT…ETSA) and 231–514 (AETE…AATA). Ser-533 is subject to Phosphoserine.

The protein belongs to the ICR family. In terms of assembly, interacts with ARAC11 in vitro. As to expression, expressed in flowers.

Acts as a scaffold, mediating interaction of ROPs with different proteins. The polypeptide is Interactor of constitutive active ROPs 3 (ICR3) (Arabidopsis thaliana (Mouse-ear cress)).